A 204-amino-acid polypeptide reads, in one-letter code: Protein GrpE (204 aa).

The tract at residues 1-55 is disordered; it reads MSSKNNPESETKAKNKWEKVMEAEEEQEEGRGDGSQEMEPHREGLEFPSREKLEG. Basic and acidic residues-rich tracts occupy residues 7–22 and 29–55; these read PESETKAKNKWEKVME and EGRGDGSQEMEPHREGLEFPSREKLEG.

Belongs to the GrpE family. As to quaternary structure, homodimer.

It localises to the cytoplasm. Its function is as follows. Participates actively in the response to hyperosmotic and heat shock by preventing the aggregation of stress-denatured proteins, in association with DnaK and GrpE. It is the nucleotide exchange factor for DnaK and may function as a thermosensor. Unfolded proteins bind initially to DnaJ; upon interaction with the DnaJ-bound protein, DnaK hydrolyzes its bound ATP, resulting in the formation of a stable complex. GrpE releases ADP from DnaK; ATP binding to DnaK triggers the release of the substrate protein, thus completing the reaction cycle. Several rounds of ATP-dependent interactions between DnaJ, DnaK and GrpE are required for fully efficient folding. This chain is Protein GrpE, found in Coxiella burnetii (strain RSA 331 / Henzerling II).